Here is a 294-residue protein sequence, read N- to C-terminus: MVLNHSHIVRLYLIKVMCQLLGMNCNTPTDIVFSFEGFRRRAGLTDCHSDGFGIAFFEGRGVRIFRDNQAASLSPIADCIKQYNIKSLNVIAHIRKATQGEVNIENTHPFIREIWGQNWVFAHNGNLKNLPDMTDHFLQPIGSTDSEAAFCYMAEYLKNTFRKKPSEMEIFEAIQKVTKGLAQHGTFNFILSNGEWMIAHCSTNLHYVMRKAPFGKAHRIDDDGVIDFSYYAKAGDKVNIITTFPLTKNESWTKMENGGFVFFKNGEKIAEVIGTPKEAIDDGTLGNRTINSAI.

Cys-18 is a catalytic residue. One can recognise a Glutamine amidotransferase type-2 domain in the interval 18-266 (CQLLGMNCNT…NGGFVFFKNG (249 aa)).

The polypeptide is Putative glutamine amidotransferase HI_1037 (Haemophilus influenzae (strain ATCC 51907 / DSM 11121 / KW20 / Rd)).